Here is a 41-residue protein sequence, read N- to C-terminus: Photosystem II reaction center protein X (41 aa).

Topologically, residues 2-6 (TITPS) are lumenal. A helical membrane pass occupies residues 7–29 (LKGFFIGLLSGAVVLGLTFAVLI). Residues 30–41 (AISQIDKVQRSL) are Cytoplasmic-facing.

The protein belongs to the PsbX family. Type 1 subfamily. In terms of assembly, PSII is composed of 1 copy each of membrane proteins PsbA, PsbB, PsbC, PsbD, PsbE, PsbF, PsbH, PsbI, PsbJ, PsbK, PsbL, PsbM, PsbT, PsbX, PsbY, PsbZ, Psb30/Ycf12, peripheral proteins PsbO, CyanoQ (PsbQ), PsbU, PsbV and a large number of cofactors. It forms dimeric complexes. Part of a photosystem II (PSII) assembly intermediate complex PSII-I; crystallized from a strain deleted of psbJ, it forms monomeric PSII before addition of the oxygen evolving complex. PSII-I includes 3 assembly factors not found in mature PSII (Psb27, Psb28 and Psb34). Requires PSII binds multiple chlorophylls, carotenoids and specific lipids. as cofactor.

It localises to the cellular thylakoid membrane. In terms of biological role, involved in the binding and/or turnover of quinones at the Q(B) site of photosystem II (PSII). PSII is a light-driven water plastoquinone oxidoreductase, using light energy to abstract electrons from H(2)O, generating a proton gradient subsequently used for ATP formation. The chain is Photosystem II reaction center protein X from Thermosynechococcus vestitus (strain NIES-2133 / IAM M-273 / BP-1).